Reading from the N-terminus, the 298-residue chain is ATP phosphoribosyltransferase (298 aa).

The protein belongs to the ATP phosphoribosyltransferase family. Long subfamily. Requires Mg(2+) as cofactor.

Its subcellular location is the cytoplasm. The catalysed reaction is 1-(5-phospho-beta-D-ribosyl)-ATP + diphosphate = 5-phospho-alpha-D-ribose 1-diphosphate + ATP. It participates in amino-acid biosynthesis; L-histidine biosynthesis; L-histidine from 5-phospho-alpha-D-ribose 1-diphosphate: step 1/9. With respect to regulation, feedback inhibited by histidine. In terms of biological role, catalyzes the condensation of ATP and 5-phosphoribose 1-diphosphate to form N'-(5'-phosphoribosyl)-ATP (PR-ATP). Has a crucial role in the pathway because the rate of histidine biosynthesis seems to be controlled primarily by regulation of HisG enzymatic activity. This chain is ATP phosphoribosyltransferase (hisG), found in Photobacterium profundum (strain SS9).